The primary structure comprises 122 residues: Large ribosomal subunit protein bL17 (122 aa).

It belongs to the bacterial ribosomal protein bL17 family. Part of the 50S ribosomal subunit. Contacts protein L32.

The chain is Large ribosomal subunit protein bL17 from Staphylococcus aureus (strain Mu3 / ATCC 700698).